Here is a 389-residue protein sequence, read N- to C-terminus: MTATALEIAQALLRCPSVTPADAGALGVLEALLQDAGFATHRVTFSEPGTADIDNLYARIGDGAPHLCFAGHTDVVPPGEETAWSHGAFAGDVEGGLLYGRGAVDMKGGIACAVAATLDYLAANGGQPQQSGKGSISFLITGDEEDVAVNGTVKLLQWAAERGERFDHCIVGEPSNVEAIGDTIKIGRRGSQSGVLIVDGRQGHVAYPHRASNPIPDIATLITALNDEPLDQGSAQFQPSNLEFTSVDVGNPATNVIPAQARAKFNIRFNDHHTQETLRALVEQRLAAACGNRIRARIEWLPSNADVFVTKPGGFTDLVSAAIADITGRSPDLNTGGGTSDARFIAKYCPVVEFGLVGQTMHQIDERTPVSDLDKLTAIYRGVLERYFR.

Histidine 72 lines the Zn(2+) pocket. The active site involves aspartate 74. Zn(2+) is bound at residue aspartate 105. Catalysis depends on glutamate 144, which acts as the Proton acceptor. Residues glutamate 145, glutamate 173, and histidine 362 each contribute to the Zn(2+) site.

It belongs to the peptidase M20A family. DapE subfamily. As to quaternary structure, homodimer. Zn(2+) is required as a cofactor. Co(2+) serves as cofactor.

The enzyme catalyses N-succinyl-(2S,6S)-2,6-diaminopimelate + H2O = (2S,6S)-2,6-diaminopimelate + succinate. The protein operates within amino-acid biosynthesis; L-lysine biosynthesis via DAP pathway; LL-2,6-diaminopimelate from (S)-tetrahydrodipicolinate (succinylase route): step 3/3. In terms of biological role, catalyzes the hydrolysis of N-succinyl-L,L-diaminopimelic acid (SDAP), forming succinate and LL-2,6-diaminopimelate (DAP), an intermediate involved in the bacterial biosynthesis of lysine and meso-diaminopimelic acid, an essential component of bacterial cell walls. The polypeptide is Succinyl-diaminopimelate desuccinylase (Rhodopseudomonas palustris (strain HaA2)).